A 475-amino-acid chain; its full sequence is Ribulose bisphosphate carboxylase large chain (475 aa).

Positions 1-2 (MS) are excised as a propeptide. P3 is subject to N-acetylproline. An N6,N6,N6-trimethyllysine modification is found at K14. Substrate is bound by residues N123 and T173. K175 serves as the catalytic Proton acceptor. K177 is a substrate binding site. Mg(2+) contacts are provided by K201, D203, and E204. At K201 the chain carries N6-carboxylysine. H294 functions as the Proton acceptor in the catalytic mechanism. Substrate-binding residues include R295, H327, and S379.

Belongs to the RuBisCO large chain family. Type I subfamily. Heterohexadecamer of 8 large chains and 8 small chains; disulfide-linked. The disulfide link is formed within the large subunit homodimers. The cofactor is Mg(2+). Post-translationally, the disulfide bond which can form in the large chain dimeric partners within the hexadecamer appears to be associated with oxidative stress and protein turnover.

Its subcellular location is the plastid. The protein localises to the chloroplast. The catalysed reaction is 2 (2R)-3-phosphoglycerate + 2 H(+) = D-ribulose 1,5-bisphosphate + CO2 + H2O. It carries out the reaction D-ribulose 1,5-bisphosphate + O2 = 2-phosphoglycolate + (2R)-3-phosphoglycerate + 2 H(+). Functionally, ruBisCO catalyzes two reactions: the carboxylation of D-ribulose 1,5-bisphosphate, the primary event in carbon dioxide fixation, as well as the oxidative fragmentation of the pentose substrate in the photorespiration process. Both reactions occur simultaneously and in competition at the same active site. The sequence is that of Ribulose bisphosphate carboxylase large chain from Zygnema circumcarinatum (Green alga).